The primary structure comprises 1119 residues: Synaptojanin (1119 aa).

The 320-residue stretch at 119–438 (LQRLLSSQMF…GDQCSTIYAG (320 aa)) folds into the SAC domain. The interval 532 to 826 (GTWNVNGGKN…DRSELKTSDH (295 aa)) is catalytic. 2 disordered regions span residues 986–1005 (SLTL…ARSE) and 1042–1119 (EHVP…PKNM). The segment covering 1050 to 1072 (PQSNNNKSPPQACLFNPFTQSAP) has biased composition (low complexity). Composition is skewed to pro residues over residues 1073-1085 (SPAP…PLPP) and 1093-1119 (PGPP…PKNM).

The protein belongs to the synaptojanin family. This sequence in the central section; belongs to the inositol 1,4,5-trisphosphate 5-phosphatase family.

The protein resides in the cytoplasmic vesicle. It is found in the secretory vesicle. It localises to the synaptic vesicle. Its subcellular location is the synapse. It catalyses the reaction a 1,2-diacyl-sn-glycero-3-phospho-(1D-myo-inositol-4,5-bisphosphate) + H2O = a 1,2-diacyl-sn-glycero-3-phospho-(1D-myo-inositol 4-phosphate) + phosphate. Its function is as follows. Probable inositol 5-phosphatase which regulates synaptic vesicle recycling in neurons by regulating clathrin-mediated endocytosis. The protein is Synaptojanin of Caenorhabditis elegans.